Here is a 99-residue protein sequence, read N- to C-terminus: Photosystem II reaction center Psb28 protein (99 aa).

It belongs to the Psb28 family. Part of the photosystem II complex.

The protein localises to the cell inner membrane. This chain is Photosystem II reaction center Psb28 protein, found in Gloeobacter violaceus (strain ATCC 29082 / PCC 7421).